The chain runs to 232 residues: MRNILPFLTRIPVKGDFEKARNELWAFPLVSLVSSIIPIAILYLRIPLANVLALLSLYFVIGLLHLDGLADWADGIMVKGDRERKIKAMKDLNTGIAGVFAVVVVLFLQVYSLSMLPFYAIYIAELNSKFSMLLGLATKKPLGQGLGAYFMEGMNGRQLAIGVVLYVLLYLPVVIYDPSALFGVMGLVFAWYVIRLSLENFGGINGDCLGAMAEITRAGTLVILSFSLCFTT.

Transmembrane regions (helical) follow at residues 24-44 (LWAFPLVSLVSSIIPIAILYL), 46-66 (IPLANVLALLSLYFVIGLLHL), 96-116 (IAGVFAVVVVLFLQVYSLSML), 117-137 (PFYAIYIAELNSKFSMLLGLA), 153-173 (GMNGRQLAIGVVLYVLLYLPV), 174-194 (VIYDPSALFGVMGLVFAWYVI), and 210-230 (GAMAEITRAGTLVILSFSLCF).

It belongs to the CobS family. The cofactor is Mg(2+).

Its subcellular location is the cell membrane. It catalyses the reaction alpha-ribazole + adenosylcob(III)inamide-GDP = adenosylcob(III)alamin + GMP + H(+). The catalysed reaction is alpha-ribazole 5'-phosphate + adenosylcob(III)inamide-GDP = adenosylcob(III)alamin 5'-phosphate + GMP + H(+). The protein operates within cofactor biosynthesis; adenosylcobalamin biosynthesis; adenosylcobalamin from cob(II)yrinate a,c-diamide: step 7/7. Joins adenosylcobinamide-GDP and alpha-ribazole to generate adenosylcobalamin (Ado-cobalamin). Also synthesizes adenosylcobalamin 5'-phosphate from adenosylcobinamide-GDP and alpha-ribazole 5'-phosphate. The polypeptide is Adenosylcobinamide-GDP ribazoletransferase (Pyrococcus abyssi (strain GE5 / Orsay)).